The chain runs to 540 residues: Probable G-protein coupled receptor 75 (540 aa).

The segment covering 1-15 has biased composition (polar residues); sequence MNSTGHLQDAPNATS. The tract at residues 1–27 is disordered; sequence MNSTGHLQDAPNATSLHVPHSQEGNST. Over 1 to 46 the chain is Extracellular; the sequence is MNSTGHLQDAPNATSLHVPHSQEGNSTSLQEGLQDLIHTATLVTCT. Residues asparagine 2, asparagine 12, and asparagine 25 are each glycosylated (N-linked (GlcNAc...) asparagine). A helical transmembrane segment spans residues 47 to 67; that stretch reads FLLAVIFCLGSYGNFIVFLSF. The Cytoplasmic segment spans residues 68–86; it reads FDPAFRKFRTNFDFMILNL. A helical membrane pass occupies residues 87–107; that stretch reads SFCDLFICGVTAPMFTFVLFF. Topologically, residues 108–120 are extracellular; the sequence is SSASSIPDAFCFT. A helical transmembrane segment spans residues 121–141; the sequence is FHLTSSGFIIMSLKTVAVIAL. Topologically, residues 142 to 160 are cytoplasmic; that stretch reads HRLRMVLGKQPNRTASFPC. A helical membrane pass occupies residues 161–181; it reads TVLLTLLLWATSFTLATLATL. Topologically, residues 182–205 are extracellular; the sequence is KTSKSHLCLPMSSLIAGKGKAILS. The helical transmembrane segment at 206 to 226 threads the bilayer; sequence LYVVDFTFCVAVVSVSYIMIA. Over 227–318 the chain is Cytoplasmic; the sequence is QTLRKNAQVR…INLSTAKDSK (92 aa). Residues 319 to 339 traverse the membrane as a helical segment; sequence AVVTCVIIVLSVLVCCLPLGI. Residues 340-350 lie on the Extracellular side of the membrane; that stretch reads SLVQVVLSSNG. A helical transmembrane segment spans residues 351-371; it reads SFILYQFELFGFTLIFFKSGL. Residues 372–540 are Cytoplasmic-facing; that stretch reads NPFIYSRNSA…SAKQIPVPSV (169 aa).

Belongs to the G-protein coupled receptor 1 family. In terms of tissue distribution, expressed at high levels in brain and spinal cord and at detectable levels in retinal pigment epithelium. In situ hybridization of adult eye sections localized transcripts only to the perivascular cells, surrounding retinal arterioles, in the ganglion cell/nerve fiber layer. Also expressed by islet cells (at protein level).

It localises to the cell membrane. Functionally, g protein-coupled receptor that is activated by the chemokine CCL5/RANTES. Probably coupled to heterotrimeric Gq proteins, it stimulates inositol trisphosphate production and calcium mobilization upon activation. Together with CCL5/RANTES, may play a role in neuron survival through activation of a downstream signaling pathway involving the PI3, Akt and MAP kinases. CCL5/RANTES may also regulate insulin secretion by pancreatic islet cells through activation of this receptor. This Homo sapiens (Human) protein is Probable G-protein coupled receptor 75 (GPR75).